Reading from the N-terminus, the 328-residue chain is Probable voltage-gated potassium channel subunit beta (328 aa).

Residues tryptophan 21, glutamine 27, and aspartate 49 each contribute to the NADP(+) site. The active-site Proton donor/acceptor is tyrosine 54. Serine 152, glutamine 178, tryptophan 207, serine 208, proline 209, leucine 210, alanine 211, lysine 218, arginine 229, glycine 285, threonine 287, glutamine 291, glutamate 294, and asparagine 295 together coordinate NADP(+).

The protein belongs to the shaker potassium channel beta subunit family. Forms heteromultimeric complexes with potassium channel alpha subunits. In terms of tissue distribution, expressed in roots, leaves and flowers (at protein level).

Its function is as follows. Probable accessory potassium channel protein which modulates the activity of the pore-forming alpha subunit. This Arabidopsis thaliana (Mouse-ear cress) protein is Probable voltage-gated potassium channel subunit beta (KAB1).